Consider the following 271-residue polypeptide: Phosphate import ATP-binding protein PstB (271 aa).

Residues 24–266 form the ABC transporter domain; the sequence is MIGNDVSVYY…PDDQRTQDYI (243 aa). Position 56–63 (56–63) interacts with ATP; that stretch reads GPSGCGKS.

Belongs to the ABC transporter superfamily. Phosphate importer (TC 3.A.1.7) family. In terms of assembly, the complex is composed of two ATP-binding proteins (PstB), two transmembrane proteins (PstC and PstA) and a solute-binding protein (PstS).

Its subcellular location is the cell inner membrane. It catalyses the reaction phosphate(out) + ATP + H2O = ADP + 2 phosphate(in) + H(+). Part of the ABC transporter complex PstSACB involved in phosphate import. Responsible for energy coupling to the transport system. This chain is Phosphate import ATP-binding protein PstB, found in Rhizobium meliloti (strain 1021) (Ensifer meliloti).